Reading from the N-terminus, the 348-residue chain is Tocopherol O-methyltransferase, chloroplastic (348 aa).

The transit peptide at 1-51 (MKATLAAPSSLTSLPYRTNSSFGSKSSLLFRSPSSSSSVSMTTTRGNVAVA) directs the protein to the chloroplast. Alanine 52 is modified (N-acetylalanine). An SAM motif I region spans residues 130–139 (VVDVGCGIGG). An SAM motif II region spans residues 193–201 (GKFDLVWSM). An SAM motif III region spans residues 220 to 229 (VAAPGGRIII).

It belongs to the class I-like SAM-binding methyltransferase superfamily. gTMT family.

The protein resides in the plastid. Its subcellular location is the chloroplast. The enzyme catalyses gamma-tocopherol + S-adenosyl-L-methionine = (+)-alpha-tocopherol + S-adenosyl-L-homocysteine + H(+). It carries out the reaction delta-tocotrienol + S-adenosyl-L-methionine = beta-tocotrienol + S-adenosyl-L-homocysteine + H(+). It catalyses the reaction gamma-tocotrienol + S-adenosyl-L-methionine = alpha-tocotrienol + S-adenosyl-L-homocysteine + H(+). The catalysed reaction is delta-tocopherol + S-adenosyl-L-methionine = beta-tocopherol + S-adenosyl-L-homocysteine + H(+). Its pathway is cofactor biosynthesis; tocopherol biosynthesis. Functionally, involved in the synthesis of tocopherol (vitamin E). Methylates gamma- and delta-tocopherol to form beta- and alpha-tocopherol, respectively. The sequence is that of Tocopherol O-methyltransferase, chloroplastic (VTE4) from Arabidopsis thaliana (Mouse-ear cress).